The following is a 129-amino-acid chain: 3-aminoacrylate deaminase RutC (129 aa).

This sequence belongs to the RutC family.

The enzyme catalyses (Z)-3-aminoacrylate + H2O + H(+) = 3-oxopropanoate + NH4(+). In terms of biological role, involved in pyrimidine catabolism. Catalyzes the deamination of 3-aminoacrylate to malonic semialdehyde, a reaction that can also occur spontaneously. RutC may facilitate the reaction and modulate the metabolic fitness, rather than catalyzing essential functions. The chain is 3-aminoacrylate deaminase RutC from Yersinia enterocolitica serotype O:8 / biotype 1B (strain NCTC 13174 / 8081).